Here is a 377-residue protein sequence, read N- to C-terminus: Queuine tRNA-ribosyltransferase (377 aa).

D89 functions as the Proton acceptor in the catalytic mechanism. Substrate-binding positions include 89 to 93 (DSGGF), D143, Q187, and G214. Residues 245–251 (GVGKPED) are RNA binding. D264 functions as the Nucleophile in the catalytic mechanism. The RNA binding; important for wobble base 34 recognition stretch occupies residues 269–273 (TRNAR). Zn(2+) contacts are provided by C302, C304, C307, and H333.

It belongs to the queuine tRNA-ribosyltransferase family. In terms of assembly, homodimer. Within each dimer, one monomer is responsible for RNA recognition and catalysis, while the other monomer binds to the replacement base PreQ1. Requires Zn(2+) as cofactor.

The enzyme catalyses 7-aminomethyl-7-carbaguanine + guanosine(34) in tRNA = 7-aminomethyl-7-carbaguanosine(34) in tRNA + guanine. It functions in the pathway tRNA modification; tRNA-queuosine biosynthesis. Functionally, catalyzes the base-exchange of a guanine (G) residue with the queuine precursor 7-aminomethyl-7-deazaguanine (PreQ1) at position 34 (anticodon wobble position) in tRNAs with GU(N) anticodons (tRNA-Asp, -Asn, -His and -Tyr). Catalysis occurs through a double-displacement mechanism. The nucleophile active site attacks the C1' of nucleotide 34 to detach the guanine base from the RNA, forming a covalent enzyme-RNA intermediate. The proton acceptor active site deprotonates the incoming PreQ1, allowing a nucleophilic attack on the C1' of the ribose to form the product. After dissociation, two additional enzymatic reactions on the tRNA convert PreQ1 to queuine (Q), resulting in the hypermodified nucleoside queuosine (7-(((4,5-cis-dihydroxy-2-cyclopenten-1-yl)amino)methyl)-7-deazaguanosine). The polypeptide is Queuine tRNA-ribosyltransferase (Shewanella halifaxensis (strain HAW-EB4)).